The primary structure comprises 215 residues: Ependymin (215 aa).

A signal peptide spans 1–20 (MHTVKLLCVVFSCLCAVAWA). N-linked (GlcNAc...) asparagine glycans are attached at residues N71 and N94.

Belongs to the ependymin family. Forms disulfide-linked dimers. In terms of processing, binds calcium through the terminal sialic acids. EPDs are synthesized in the meninx and secreted in the cerebrospinal fluid.

The protein localises to the secreted. May play a role in neural plasticity. May be involved during axon regeneration. The chain is Ependymin (epd) from Cyprinus carpio (Common carp).